The sequence spans 204 residues: Small ribosomal subunit protein uS4 (204 aa).

Residues 1–46 (MSKRHSSKYKIDRRMGENIWGRPKSPVNRREYGPGQHGQRRRSKIS) form a disordered region. The region spanning 94 to 157 (RRLDMIVYRA…QEMALVLEAQ (64 aa)) is the S4 RNA-binding domain.

The protein belongs to the universal ribosomal protein uS4 family. As to quaternary structure, part of the 30S ribosomal subunit. Contacts protein S5. The interaction surface between S4 and S5 is involved in control of translational fidelity.

In terms of biological role, one of the primary rRNA binding proteins, it binds directly to 16S rRNA where it nucleates assembly of the body of the 30S subunit. With S5 and S12 plays an important role in translational accuracy. The sequence is that of Small ribosomal subunit protein uS4 from Zymomonas mobilis subsp. mobilis (strain ATCC 31821 / ZM4 / CP4).